The sequence spans 190 residues: dCTP deaminase, dUMP-forming (190 aa).

Residues 101-106 (KSSLGR), Asp-119, 127-129 (TLE), Gln-148, Tyr-162, and Gln-174 contribute to the dCTP site. Glu-129 (proton donor/acceptor) is an active-site residue. Residues 161-190 (PYGSSGVGSKYQGQRGPTPSRSYQNFIRST) form a disordered region. The span at 171 to 190 (YQGQRGPTPSRSYQNFIRST) shows a compositional bias: polar residues.

It belongs to the dCTP deaminase family. As to quaternary structure, homotrimer.

The enzyme catalyses dCTP + 2 H2O = dUMP + NH4(+) + diphosphate. Its pathway is pyrimidine metabolism; dUMP biosynthesis; dUMP from dCTP: step 1/1. In terms of biological role, bifunctional enzyme that catalyzes both the deamination of dCTP to dUTP and the hydrolysis of dUTP to dUMP without releasing the toxic dUTP intermediate. This Mycobacterium ulcerans (strain Agy99) protein is dCTP deaminase, dUMP-forming.